Consider the following 449-residue polypeptide: Dynein regulatory complex protein 10 (449 aa).

Residues 90–125 (AVREHEDLCQVLLENVRCLKEKERQLQEQKEAEEEG) are a coiled coil. Residues 400 to 429 (MVRAATLIQALWKGYLVRSLLRSKKKRGKG) form the IQ domain. Residues 422 to 449 (SKKKRGKGKAKDKEKGKQKGKEKGKGKK) are disordered. Positions 430-449 (KAKDKEKGKQKGKEKGKGKK) are enriched in basic and acidic residues.

This sequence belongs to the DRC10 family. In terms of assembly, component of the nexin-dynein regulatory complex (N-DRC). Interacts with CFAP52.

It localises to the cytoplasm. It is found in the cytoskeleton. The protein resides in the flagellum axoneme. In terms of biological role, component of the nexin-dynein regulatory complex (N-DRC), a key regulator of ciliary/flagellar motility which maintains the alignment and integrity of the distal axoneme and regulates microtubule sliding in motile axonemes. The polypeptide is Dynein regulatory complex protein 10 (IQCD) (Homo sapiens (Human)).